Consider the following 132-residue polypeptide: Small ribosomal subunit protein eS17B (132 aa).

At S43 the chain carries Phosphoserine.

The protein belongs to the eukaryotic ribosomal protein eS17 family. Component of the small ribosomal subunit (SSU). Mature yeast ribosomes consist of a small (40S) and a large (60S) subunit. The 40S small subunit contains 1 molecule of ribosomal RNA (18S rRNA) and at least 33 different proteins. The large 60S subunit contains 3 rRNA molecules (25S, 5.8S and 5S rRNA) and at least 46 different proteins.

It localises to the cytoplasm. Its function is as follows. Component of the ribosome, a large ribonucleoprotein complex responsible for the synthesis of proteins in the cell. The small ribosomal subunit (SSU) binds messenger RNAs (mRNAs) and translates the encoded message by selecting cognate aminoacyl-transfer RNA (tRNA) molecules. The large subunit (LSU) contains the ribosomal catalytic site termed the peptidyl transferase center (PTC), which catalyzes the formation of peptide bonds, thereby polymerizing the amino acids delivered by tRNAs into a polypeptide chain. The nascent polypeptides leave the ribosome through a tunnel in the LSU and interact with protein factors that function in enzymatic processing, targeting, and the membrane insertion of nascent chains at the exit of the ribosomal tunnel. This is Small ribosomal subunit protein eS17B (rps1702) from Schizosaccharomyces pombe (strain 972 / ATCC 24843) (Fission yeast).